The sequence spans 83 residues: MSSGGLFLLLGLLTLWEVLTPVSSKDRPKFCELPADSGSCKGNFQAFYYHPVHRTCLEFIYGGCEGNDNNFKTIDECKRTCAT.

An N-terminal signal peptide occupies residues 1–24; that stretch reads MSSGGLFLLLGLLTLWEVLTPVSS. The BPTI/Kunitz inhibitor domain occupies 31-81; sequence CELPADSGSCKGNFQAFYYHPVHRTCLEFIYGGCEGNDNNFKTIDECKRTC. 3 cysteine pairs are disulfide-bonded: C31/C81, C40/C64, and C56/C77.

It belongs to the venom Kunitz-type family. As to expression, expressed by the venom gland.

The protein localises to the secreted. Functionally, serine protease inhibitor that acts against trypsin (EC(50)=10 nM, Ki=5nM), and plasmin (EC(50)=200 nM, Ki=100 nM). The polypeptide is Kunitz serine protease inhibitor Pr-mulgin 3 (Pseudechis rossignolii (Papuan pigmy mulga snake)).